A 150-amino-acid polypeptide reads, in one-letter code: Globin-2 (150 aa).

The Globin domain occupies 11 to 150 (PLSDAEKNKI…MICILLSSAY (140 aa)). Heme b-binding residues include histidine 74 and histidine 106.

Belongs to the globin family. Monomer.

This chain is Globin-2, found in Mordacia mordax (Southern hemisphere lamprey).